A 462-amino-acid chain; its full sequence is Transcript termination protein A18 (462 aa).

Residues 99 to 255 form the Helicase ATP-binding domain; the sequence is KCKEKRPLYT…NSIINFIKFS (157 aa). Residue 112–119 coordinates ATP; it reads LACGFGKT. The DEAH box signature appears at 205 to 208; sequence DEAH. The region spanning 308–459 is the Helicase C-terminal domain; that stretch reads IVDKIIETFK…ATKLGFREVS (152 aa).

The protein belongs to the helicase family. Poxviruses subfamily. In terms of assembly, interacts with G2. Might be part of a transcription complex composed at least of G2, A18, and H5.

It localises to the virion. Functionally, DNA helicase which seems to act as a postreplicative transcription termination factor. Involved in ATP-dependent release of nascent RNA. Forms a stable complex with single-stranded DNA, and to a lesser extent RNA. This is Transcript termination protein A18 from Vertebrata (FPV).